We begin with the raw amino-acid sequence, 529 residues long: Variant surface glycoprotein MITAT 1.6 (529 aa).

The first 24 residues, 1-24 (MAVHRALAAYAISLYVLLPRKSGA), serve as a signal peptide directing secretion. Cystine bridges form between cysteine 39-cysteine 170 and cysteine 147-cysteine 214. The N-linked (GlcNAc...) (high mannose) asparagine glycan is linked to asparagine 456. The GPI-anchor amidated aspartate moiety is linked to residue aspartate 506. Positions 507 to 529 (SSILVTKKFALTVVSAAFVALLF) are cleaved as a propeptide — removed in mature form.

Post-translationally, N-glycosylated; glycan is composed of 6 to 9 mannose residues.

Its subcellular location is the cell membrane. Functionally, VSG forms a coat on the surface of the parasite. The trypanosome evades the immune response of the host by expressing a series of antigenically distinct VSGs from an estimated 1000 VSG genes. This Trypanosoma brucei brucei protein is Variant surface glycoprotein MITAT 1.6.